We begin with the raw amino-acid sequence, 70 residues long: DNA-binding transcriptional activator AlpA (70 aa).

Residues 12-31 constitute a DNA-binding region (H-T-H motif); the sequence is LPAVIQKTGMARATIYDWLN.

Its function is as follows. Positive regulator of the expression of the slpA gene. When overexpressed, leads to suppression of the capsule overproduction and UV sensitivity phenotypes of cells mutant for the Lon ATP-dependent protease. Part of the cryptic P4-like prophage CP4-57. Overexpression of AlpA leads to excision of the CP4-57 prophage by IntA. This inactivates ssrA (the gene upstream of the prophage) that encodes tmRNA which is required to rescue stalled ribosomes in a process known as trans-translation. This Escherichia coli (strain K12) protein is DNA-binding transcriptional activator AlpA.